The sequence spans 469 residues: Squamosa promoter-binding-like protein 3 (469 aa).

The segment at 96-118 (SAEEHDKNMDKGKSKVDDTGTSR) is disordered. Over residues 97–115 (AEEHDKNMDKGKSKVDDTG) the composition is skewed to basic and acidic residues. The SBP-type zinc-finger motif lies at 179 to 256 (NPHCQVEGCN…HDHNARRRKP (78 aa)). Residues C182, C187, C204, H207, C223, C226, H230, and C242 each coordinate Zn(2+). The Bipartite nuclear localization signal signature appears at 239 to 255 (KRSCRRRLHDHNARRRK). Positions 446–469 (NDDDEDHLQLPKPSYDNSHYDQMN) are disordered. The segment covering 460 to 469 (YDNSHYDQMN) has biased composition (polar residues).

Ubiquitous.

It localises to the nucleus. Trans-acting factor that binds specifically to the consensus nucleotide sequence 5'-TNCGTACAA-3'. May be involved in panicle development. The protein is Squamosa promoter-binding-like protein 3 (SPL3) of Oryza sativa subsp. indica (Rice).